The sequence spans 244 residues: MDWRADGILLAVRRHGEASAIIELFTADQGCHLGVVRGGASRKMAPLLQVGAQLDATWRARLSDHIGSYTVELVKGRAAEVMEDRVALAGLSSVCALLSFSLPERAAYPGLFARTLAVLDGLGAERWAEAYLGWEMALLTEMGFGLDLSQCAATGVTQDLAFISPRTGRAVSRAAAGEWADRLLPLSPALEGMARGPEDILAGLAVTGHFLATHLAPSLGDKPLPAARQRLIDALERQVIRGGS.

Belongs to the RecO family.

Involved in DNA repair and RecF pathway recombination. This chain is DNA repair protein RecO, found in Jannaschia sp. (strain CCS1).